The following is a 217-amino-acid chain: 3-demethoxyubiquinol 3-hydroxylase (217 aa).

Residues Glu-66, Glu-96, His-99, Glu-148, Glu-180, and His-183 each coordinate Fe cation.

The protein belongs to the COQ7 family. Requires Fe cation as cofactor.

The protein resides in the cell membrane. It catalyses the reaction a 5-methoxy-2-methyl-3-(all-trans-polyprenyl)benzene-1,4-diol + AH2 + O2 = a 3-demethylubiquinol + A + H2O. Its pathway is cofactor biosynthesis; ubiquinone biosynthesis. Catalyzes the hydroxylation of 2-nonaprenyl-3-methyl-6-methoxy-1,4-benzoquinol during ubiquinone biosynthesis. In Xanthomonas euvesicatoria pv. vesicatoria (strain 85-10) (Xanthomonas campestris pv. vesicatoria), this protein is 3-demethoxyubiquinol 3-hydroxylase.